The primary structure comprises 271 residues: (21S)-21-acetoxyl-apo-melianone synthase SDR (271 aa).

S150 acts as the Proton donor in catalysis. Y163 (proton acceptor) is an active-site residue. K167 (proton donor/acceptor) is an active-site residue.

Belongs to the short-chain dehydrogenases/reductases (SDR) family. In terms of tissue distribution, mainly expressed in petioles.

It catalyses the reaction 21-O-acetyl-isomeliandiol + A = (21S)-21-acetoxyl-apo-melianone + AH2. Its pathway is secondary metabolite biosynthesis; terpenoid biosynthesis. Oxidoreductase involved in the biosynthesis of limonoids triterpene natural products such as azadirachtin, an antifeedant widely used as bioinsecticide, and possessing many medicinal applications including anti-tumoral, anti-malarial, anti-rheumatic, antibacterial, anti-inflammatory, anti-pyretic and diuretic effects. Catalyzes the oxidation of 21-O-acetyl-isomeliandiol to (21S)-21-acetoxyl-apo-melianone. The polypeptide is (21S)-21-acetoxyl-apo-melianone synthase SDR (Melia azedarach (Chinaberry tree)).